The primary structure comprises 249 residues: Probable transcriptional regulatory protein GOX1679 (249 aa).

This sequence belongs to the TACO1 family.

It localises to the cytoplasm. This chain is Probable transcriptional regulatory protein GOX1679, found in Gluconobacter oxydans (strain 621H) (Gluconobacter suboxydans).